The chain runs to 392 residues: Bifunctional enzyme Fae/Hps (392 aa).

The formaldehyde-activating enzyme stretch occupies residues 1 to 161 (MFQIGEALMG…EESNKSTHAI (161 aa)). His17 functions as the Proton donor in the catalytic mechanism. Substrate-binding residues include Asp19, Leu48, Lys66, Thr68, and Gln83. Positions 162 to 392 (MGFKVTRLWD…IDQFRVMTDF (231 aa)) are 3-hexulose-6-phosphate synthase.

This sequence in the N-terminal section; belongs to the formaldehyde-activating enzyme family. It in the C-terminal section; belongs to the HPS/KGPDC family. HPS subfamily.

The catalysed reaction is 5,6,7,8-tetrahydromethanopterin + formaldehyde = 5,10-methylenetetrahydromethanopterin + H2O. It catalyses the reaction D-ribulose 5-phosphate + formaldehyde = D-arabino-hex-3-ulose 6-phosphate. The protein operates within carbohydrate biosynthesis; D-ribose 5-phosphate biosynthesis. In terms of biological role, catalyzes the condensation of formaldehyde with tetrahydromethanopterin (H(4)MPT) to 5,10-methylenetetrahydromethanopterin. Functionally, catalyzes the reversible formation of ribulose-5-phosphate and formaldehyde from 3-hexulose-6-phosphate. This chain is Bifunctional enzyme Fae/Hps, found in Methanosarcina mazei (strain ATCC BAA-159 / DSM 3647 / Goe1 / Go1 / JCM 11833 / OCM 88) (Methanosarcina frisia).